A 545-amino-acid polypeptide reads, in one-letter code: Serine/threonine-protein kinase PAK 1 (545 aa).

A disordered region spans residues 1–75; that stretch reads MSNNGVDIQD…KKREKERPEI (75 aa). N-acetylserine is present on S2. S21 is subject to Phosphoserine; by PKB and autocatalysis. S57 is subject to Phosphoserine; by autocatalysis. Positions 70–140 are autoregulatory region; the sequence is KERPEISLPS…YNSKKTSNSK (71 aa). Residues 75–88 form the CRIB domain; it reads ISLPSDFEHTIHVG. Positions 75–105 are GTPase-binding; that stretch reads ISLPSDFEHTIHVGFDAVTGEFTGMPEQWAR. Position 84 is a phosphothreonine; by OXSR1 (T84). S115 is modified (phosphoserine). Phosphotyrosine is present on residues Y131 and Y142. 2 positions are modified to phosphoserine; by autocatalysis: S144 and S149. Residues 150–198 form a disordered region; that stretch reads AEDYNSSNTLNVKTVSETPAVPPVSEDDEDDDDDATPPPVIAPRPEHTK. Polar residues predominate over residues 152–166; the sequence is DYNSSNTLNVKTVSE. At Y153 the chain carries Phosphotyrosine; by JAK2. S174 is subject to Phosphoserine. Residues 174 to 184 are compositionally biased toward acidic residues; that stretch reads SEDDEDDDDDA. T185 carries the post-translational modification Phosphothreonine. S199 is subject to Phosphoserine; by autocatalysis. Y201 is modified (phosphotyrosine; by JAK2). Phosphoserine; by autocatalysis is present on S204. A disordered region spans residues 210-250; it reads PVTPTRDVATSPISPTENNTTPPDALTRNTEKQKKKPKMSD. Phosphothreonine occurs at positions 212 and 219. S220 and S223 each carry phosphoserine. Polar residues predominate over residues 220–231; it reads SPISPTENNTTP. 3 positions are modified to phosphothreonine: T225, T229, and T230. Residues 270 to 521 enclose the Protein kinase domain; the sequence is YTPFEKIGQG…AKELLQHQFL (252 aa). 276–284 provides a ligand contact to ATP; the sequence is IGQGASGTV. Y285 bears the Phosphotyrosine; by JAK2 mark. K299 is a binding site for ATP. The Proton acceptor role is filled by D389. A Phosphothreonine; by autocatalysis, BRSK2 and PDPK1 modification is found at T423.

Belongs to the protein kinase superfamily. STE Ser/Thr protein kinase family. STE20 subfamily. Homodimer in its autoinhibited state. Active as monomer. Interacts with GIT1. Component of cytoplasmic complexes, which also contains PXN, ARHGEF7 and GIT1. Interacts with NISCH. Interacts with DVL1; mediates the formation of a DVL1, MUSK and PAK1 ternary complex involved in AChR clustering. Binds to the caspase-cleaved p110 isoform of CDC2L1 and CDC2L2, p110C, but not the full-length proteins. Interacts with ARHGEF7. Interacts tightly with GTP-bound but not GDP-bound CDC42/P21 and RAC1. Interacts with SCRIB. Interacts with PDPK1. Interacts (via kinase domain) with RAF1. Interacts with NCK1 and NCK2. Interacts with TBCB. Interacts with BRSK2. Interacts with SNAI1. Interacts with CIB1 (via N-terminal region); the interaction is direct, promotes PAK1 activity and occurs in a calcium-dependent manner. Interacts with INPP5K. Interacts with gamma-tubulin. Interacts with RHOU; the interaction promotes PAK1 activation. The cofactor is Mg(2+). Post-translationally, autophosphorylated in trans, meaning that in a dimer, one kinase molecule phosphorylates the other one. Activated by autophosphorylation at Thr-423 in response to a conformation change, triggered by interaction with GTP-bound CDC42 or RAC1. Activated by phosphorylation at Thr-423 by BRSK2 and by PDPK1. Phosphorylated by JAK2 in response to PRL; this increases PAK1 kinase activity. Phosphorylated at Ser-21 by PKB/AKT; this reduces interaction with NCK1 and association with focal adhesion sites. Upon DNA damage, phosphorylated at Thr-212 and translocates to the nucleoplasm. Phosphorylated at tyrosine residues, which can be enhanced by NTN1.

Its subcellular location is the cytoplasm. It localises to the cell junction. The protein resides in the focal adhesion. It is found in the cell projection. The protein localises to the lamellipodium. Its subcellular location is the cell membrane. It localises to the ruffle membrane. The protein resides in the invadopodium. It is found in the nucleus. The protein localises to the nucleoplasm. Its subcellular location is the chromosome. It localises to the cytoskeleton. The protein resides in the microtubule organizing center. It is found in the centrosome. It carries out the reaction L-seryl-[protein] + ATP = O-phospho-L-seryl-[protein] + ADP + H(+). The enzyme catalyses L-threonyl-[protein] + ATP = O-phospho-L-threonyl-[protein] + ADP + H(+). With respect to regulation, phosphorylation of Thr-84 by OXSR1 inhibits activation. Activated by binding small G proteins. Binding of GTP-bound CDC42 or RAC1 to the autoregulatory region releases monomers from the autoinhibited dimer, and enables activation by phosphorylation of Thr-423. Functionally, protein kinase involved in intracellular signaling pathways downstream of integrins and receptor-type kinases that plays an important role in cytoskeleton dynamics, in cell adhesion, migration, proliferation, apoptosis, mitosis, and in vesicle-mediated transport processes. Can directly phosphorylate BAD and protects cells against apoptosis. Activated by interaction with CDC42 and RAC1. Functions as a GTPase effector that links the Rho-related GTPases CDC42 and RAC1 to the JNK MAP kinase pathway. Phosphorylates and activates MAP2K1, and thereby mediates activation of downstream MAP kinases. Involved in the reorganization of the actin cytoskeleton, actin stress fibers and of focal adhesion complexes. Phosphorylates the tubulin chaperone TBCB and thereby plays a role in the regulation of microtubule biogenesis and organization of the tubulin cytoskeleton. Plays a role in the regulation of insulin secretion in response to elevated glucose levels. Part of a ternary complex that contains PAK1, DVL1 and MUSK that is important for MUSK-dependent regulation of AChR clustering during the formation of the neuromuscular junction (NMJ). Activity is inhibited in cells undergoing apoptosis, potentially due to binding of CDC2L1 and CDC2L2. Phosphorylates MYL9/MLC2. Phosphorylates RAF1 at 'Ser-338' and 'Ser-339' resulting in: activation of RAF1, stimulation of RAF1 translocation to mitochondria, phosphorylation of BAD by RAF1, and RAF1 binding to BCL2. Phosphorylates SNAI1 at 'Ser-246' promoting its transcriptional repressor activity by increasing its accumulation in the nucleus. In podocytes, promotes NR3C2 nuclear localization. Required for atypical chemokine receptor ACKR2-induced phosphorylation of LIMK1 and cofilin (CFL1) and for the up-regulation of ACKR2 from endosomal compartment to cell membrane, increasing its efficiency in chemokine uptake and degradation. In synapses, seems to mediate the regulation of F-actin cluster formation performed by SHANK3, maybe through CFL1 phosphorylation and inactivation. Plays a role in RUFY3-mediated facilitating gastric cancer cells migration and invasion. In response to DNA damage, phosphorylates MORC2 which activates its ATPase activity and facilitates chromatin remodeling. In neurons, plays a crucial role in regulating GABA(A) receptor synaptic stability and hence GABAergic inhibitory synaptic transmission through its role in F-actin stabilization. In hippocampal neurons, necessary for the formation of dendritic spines and excitatory synapses; this function is dependent on kinase activity and may be exerted by the regulation of actomyosin contractility through the phosphorylation of myosin II regulatory light chain (MLC). Along with GIT1, positively regulates microtubule nucleation during interphase. Phosphorylates FXR1, promoting its localization to stress granules and activity. Phosphorylates ILK on 'Thr-173' and 'Ser-246', promoting nuclear export of ILK. In Mus musculus (Mouse), this protein is Serine/threonine-protein kinase PAK 1.